A 336-amino-acid polypeptide reads, in one-letter code: MYYPFVRKALFQLDPERAHEFTFQQLRRITGTPLEALVRQKVPTKPVTCMGLTFKNPLGLAAGLDKDGECIDALDAMGFGSLEIGTVTPRPQPGNDKPRLFRLVDAEGLINRMGFNNLGVDNLVENVKKAHFDGILGINIGKNKDTPVENGKDDYLICMEKVYAYAGYIAINISSPNTLGLRTLQYGDALDDLLTAIKNKQNDLQAIHHKYVPVAVKIAPDLCEEELIQVADSLLRHNIDGVIATNTTLDRSLVQGMKNCQQTGGLSGRPLQLKSTEIIRRLSQELKGQLPIIGVGGIDSVIAAREKIAAGATLVQIYSGFIFKGPPLIKEIVTHI.

Residues Ala62 to Lys66 and Thr86 each bind FMN. Residue Lys66 coordinates substrate. Asn111–Phe115 provides a ligand contact to substrate. Residues Asn139 and Asn172 each contribute to the FMN site. Position 172 (Asn172) interacts with substrate. Ser175 acts as the Nucleophile in catalysis. Asn177 serves as a coordination point for substrate. FMN is bound by residues Lys217 and Thr245. Position 246 to 247 (Asn246 to Thr247) interacts with substrate. Residues Gly268, Gly297, and Tyr318–Ser319 each bind FMN.

This sequence belongs to the dihydroorotate dehydrogenase family. Type 2 subfamily. Monomer. FMN is required as a cofactor.

It is found in the cell membrane. It catalyses the reaction (S)-dihydroorotate + a quinone = orotate + a quinol. Its pathway is pyrimidine metabolism; UMP biosynthesis via de novo pathway; orotate from (S)-dihydroorotate (quinone route): step 1/1. In terms of biological role, catalyzes the conversion of dihydroorotate to orotate with quinone as electron acceptor. This chain is Dihydroorotate dehydrogenase (quinone), found in Salmonella choleraesuis (strain SC-B67).